The primary structure comprises 226 residues: MQIRFLGQSAFLLTSGVHQLLIDPFIAGNPKSPVTLEEALGWKVDAVLISHAHGDHWGNALDFGRAGVPVIGTAEIGGYAQKNGAQNAIGMNIGGTYRAPWGSVTLTPAWHSSSFPDGTYGGMPTGLIIEMDGVRVYHAGDTNLFSDMRLIGDRGLDVALLPIGDHYTMGPEEAARTLELLRPRVAIPMHYGTFPVLTGDPQVFAREGRARGVDVRVLAPGETAEV.

This sequence belongs to the UPF0173 family.

This Deinococcus geothermalis (strain DSM 11300 / CIP 105573 / AG-3a) protein is UPF0173 metal-dependent hydrolase Dgeo_0136.